The following is a 426-amino-acid chain: COMPASS component SWD1 (426 aa).

WD repeat units follow at residues 24-63, 70-109, 212-251, 264-307, and 310-350; these read ENPL…PICV, AHVR…KPLK, ITSS…ENSA, INKL…LVRV, and GAEE…KWSA. The DNA site is built by Arg-236 and Lys-266.

Component of the Set1C/COMPASS complex which consists of SET1(2), BRE2(2), SPP1(2), SDC1(1), SHG1(1), SWD1(1), SWD2(1), and SWD3(1).

Its subcellular location is the nucleus. It is found in the chromosome. The protein resides in the telomere. Functionally, component of the Set1C/COMPASS complex that specifically mono-, di- and trimethylates histone H3 to form H3K4me1/2/3, which subsequently plays a role in telomere length maintenance and transcription elongation regulation. COMPASS recognizes ubiquitinated H2B on one face of the nucleosome which stimulates the methylation of H3 on the opposing face. SWD1/CPS50 acts as an assembly and regulatory hub for COMPASS complex formation. Serves as a highly utilized surface for COMPASS interaction with the nucleosome. The chain is COMPASS component SWD1 from Saccharomyces cerevisiae (strain ATCC 204508 / S288c) (Baker's yeast).